The chain runs to 850 residues: DEAD-box ATP-dependent RNA helicase 26 (850 aa).

Disordered regions lie at residues 60-82 and 106-350; these read TRPE…IRAS and GKFT…ENDE. Positions 61–71 are enriched in basic and acidic residues; that stretch reads RPERSQPEFAR. A Phosphothreonine modification is found at Thr109. Ser110 bears the Phosphoserine mark. Composition is skewed to basic and acidic residues over residues 118–140 and 284–299; these read EVVR…EGQS and GRND…REPG. Acidic residues-rich tracts occupy residues 315–325 and 336–350; these read LEEEDSSDDDE and LPSE…ENDE. Residues 382–410 carry the Q motif motif; the sequence is TRFDQFPLSPLSLKAIKDAGFETMTVVQE. A Helicase ATP-binding domain is found at 413–596; sequence LPIILQGKDV…HVALKRDHEF (184 aa). 426-433 contacts ATP; it reads AKTGTGKT. The DEAD box motif lies at 544–547; that stretch reads DEAD. In terms of domain architecture, Helicase C-terminal spans 630 to 777; that stretch reads LLKEHIADNV…IDPEAVKRVQ (148 aa).

It belongs to the DEAD box helicase family.

It catalyses the reaction ATP + H2O = ADP + phosphate + H(+). The polypeptide is DEAD-box ATP-dependent RNA helicase 26 (RH26) (Arabidopsis thaliana (Mouse-ear cress)).